We begin with the raw amino-acid sequence, 356 residues long: UDP-N-acetylglucosamine--N-acetylmuramyl-(pentapeptide) pyrophosphoryl-undecaprenol N-acetylglucosamine transferase (356 aa).

UDP-N-acetyl-alpha-D-glucosamine-binding residues include arginine 166, serine 196, and glutamine 290.

It belongs to the glycosyltransferase 28 family. MurG subfamily.

It is found in the cell membrane. It carries out the reaction Mur2Ac(oyl-L-Ala-gamma-D-Glu-L-Lys-D-Ala-D-Ala)-di-trans,octa-cis-undecaprenyl diphosphate + UDP-N-acetyl-alpha-D-glucosamine = beta-D-GlcNAc-(1-&gt;4)-Mur2Ac(oyl-L-Ala-gamma-D-Glu-L-Lys-D-Ala-D-Ala)-di-trans,octa-cis-undecaprenyl diphosphate + UDP + H(+). It functions in the pathway cell wall biogenesis; peptidoglycan biosynthesis. Its function is as follows. Cell wall formation. Catalyzes the transfer of a GlcNAc subunit on undecaprenyl-pyrophosphoryl-MurNAc-pentapeptide (lipid intermediate I) to form undecaprenyl-pyrophosphoryl-MurNAc-(pentapeptide)GlcNAc (lipid intermediate II). The chain is UDP-N-acetylglucosamine--N-acetylmuramyl-(pentapeptide) pyrophosphoryl-undecaprenol N-acetylglucosamine transferase from Staphylococcus aureus (strain MRSA252).